The primary structure comprises 352 residues: Quinolinate synthase (352 aa).

2 residues coordinate iminosuccinate: His48 and Ser69. Cys114 is a [4Fe-4S] cluster binding site. Iminosuccinate is bound by residues 140–142 and Ser157; that span reads YAN. Cys201 is a binding site for [4Fe-4S] cluster. Iminosuccinate contacts are provided by residues 227–229 and Thr244; that span reads HPE. Cys298 contributes to the [4Fe-4S] cluster binding site.

This sequence belongs to the quinolinate synthase family. Type 1 subfamily. [4Fe-4S] cluster is required as a cofactor.

It is found in the cytoplasm. It carries out the reaction iminosuccinate + dihydroxyacetone phosphate = quinolinate + phosphate + 2 H2O + H(+). It functions in the pathway cofactor biosynthesis; NAD(+) biosynthesis; quinolinate from iminoaspartate: step 1/1. In terms of biological role, catalyzes the condensation of iminoaspartate with dihydroxyacetone phosphate to form quinolinate. In Pseudomonas putida (strain GB-1), this protein is Quinolinate synthase.